The following is a 593-amino-acid chain: Corrinoid activation enzyme RamQ (593 aa).

In terms of domain architecture, 2Fe-2S ferredoxin-type spans 1–76 (MRVLFPLLEE…GMEIYASREQ (76 aa)). [2Fe-2S] cluster is bound by residues Cys35, Cys41, Cys44, and Cys60.

It depends on [2Fe-2S] cluster as a cofactor.

Involved in the degradation of the quaternary amines L-proline betaine and L-carnitine. Component of a corrinoid-dependent methyltransferase system that transfers a methyl group from L-proline betaine or L-carnitine to tetrahydrofolate (THF), forming methyl-THF, a key intermediate in the Wood-Ljungdahl acetogenesis pathway. RamQ is not required for the methyl transfer, but it stimulates reduction of reconstituted MtqC from the Co(II) state to the Co(I) state in vitro. It also stimulates the rate of THF methylation. The polypeptide is Corrinoid activation enzyme RamQ (Eubacterium limosum).